Reading from the N-terminus, the 274-residue chain is Ommochrome-binding protein (274 aa).

Residues Met1–Ala18 form the signal peptide. N-linked (GlcNAc...) asparagine glycosylation is present at Asn183.

Monomer. Present in larval hemolymph and synthesized by the fat body.

Binds to an ommochrome, ommatin D which is a yellow chromophore. May be involved in guiding the chromophore through the hemolymph from the epidermis to the gut. The polypeptide is Ommochrome-binding protein (Manduca sexta (Tobacco hawkmoth)).